The sequence spans 265 residues: 5'-nucleotidase SurE (265 aa).

Residues Asp-8, Asp-9, Ser-40, and Asn-98 each contribute to the a divalent metal cation site.

Belongs to the SurE nucleotidase family. Requires a divalent metal cation as cofactor.

It is found in the cytoplasm. It carries out the reaction a ribonucleoside 5'-phosphate + H2O = a ribonucleoside + phosphate. In terms of biological role, nucleotidase that shows phosphatase activity on nucleoside 5'-monophosphates. The sequence is that of 5'-nucleotidase SurE from Trichormus variabilis (strain ATCC 29413 / PCC 7937) (Anabaena variabilis).